Here is a 425-residue protein sequence, read N- to C-terminus: Glucan 1,3-beta-glucosidase (425 aa).

The signal sequence occupies residues 1–19 (MNLTLLLLALIFSPSLIFS). The active-site Proton donor is the Glu-219. Disulfide bonds link Cys-301/Cys-423 and Cys-326/Cys-352. Glu-318 (nucleophile) is an active-site residue.

It belongs to the glycosyl hydrolase 5 (cellulase A) family.

It is found in the secreted. The catalysed reaction is Successive hydrolysis of beta-D-glucose units from the non-reducing ends of (1-&gt;3)-beta-D-glucans, releasing alpha-glucose.. In terms of biological role, beta-glucanases participate in the metabolism of beta-glucan, the main structural component of the cell wall. It could also function biosynthetically as a transglycosylase. The protein is Glucan 1,3-beta-glucosidase of Schwanniomyces occidentalis (Yeast).